The following is a 328-amino-acid chain: Tetraacyldisaccharide 4'-kinase (328 aa).

ATP is bound at residue 55–62; it reads TAGGNGKT.

Belongs to the LpxK family.

The enzyme catalyses a lipid A disaccharide + ATP = a lipid IVA + ADP + H(+). Its pathway is glycolipid biosynthesis; lipid IV(A) biosynthesis; lipid IV(A) from (3R)-3-hydroxytetradecanoyl-[acyl-carrier-protein] and UDP-N-acetyl-alpha-D-glucosamine: step 6/6. In terms of biological role, transfers the gamma-phosphate of ATP to the 4'-position of a tetraacyldisaccharide 1-phosphate intermediate (termed DS-1-P) to form tetraacyldisaccharide 1,4'-bis-phosphate (lipid IVA). This chain is Tetraacyldisaccharide 4'-kinase, found in Yersinia pseudotuberculosis serotype I (strain IP32953).